A 374-amino-acid chain; its full sequence is 5-hydroxytryptamine receptor 1D (374 aa).

Asparagine 5, asparagine 17, and asparagine 21 each carry an N-linked (GlcNAc...) asparagine glycan. The next 3 helical transmembrane spans lie at 36 to 61 (ISLVVVLSIITLATVLSNAFVLTTIL), 73 to 94 (LIGSLATTDLLVSILVMPISIA), and 107 to 131 (LCDIWVSSDITCCTASILHLCVIAL). An intrachain disulfide couples cysteine 108 to cysteine 185. Serotonin-binding residues include aspartate 115 and cysteine 119. Residues 132–134 (DRY) carry the DRY motif; important for ligand-induced conformation changes motif. The next 4 helical transmembrane spans lie at 152 to 173 (AAAMIAAVWAISICISIPPLFW), 192 to 215 (ISYTIYSTCGAFYIPSILLIILYG), 298 to 323 (KTLGIILGAFIICWLPFFVVSLVLPI), and 333 to 356 (ALFDFFTWLGYLNSLINPVIYTVF). Serine 318 is a serotonin binding site. The NPxxY motif; important for ligand-induced conformation changes and signaling motif lies at 349–353 (NPVIY).

This sequence belongs to the G-protein coupled receptor 1 family. As to quaternary structure, homodimer. Heterodimer with HTR1B. As to expression, detected in dorsal raphe.

Its subcellular location is the cell membrane. G-protein coupled receptor for 5-hydroxytryptamine (serotonin). Also functions as a receptor for ergot alkaloid derivatives, various anxiolytic and antidepressant drugs and other psychoactive substances. Ligand binding causes a conformation change that triggers signaling via guanine nucleotide-binding proteins (G proteins) and modulates the activity of downstream effectors, such as adenylate cyclase. HTR1D is coupled to G(i)/G(o) G alpha proteins and mediates inhibitory neurotransmission by inhibiting adenylate cyclase activity. Regulates the release of 5-hydroxytryptamine in the brain, and thereby affects neural activity. May also play a role in regulating the release of other neurotransmitters. May play a role in vasoconstriction. This is 5-hydroxytryptamine receptor 1D (Htr1d) from Rattus norvegicus (Rat).